A 143-amino-acid polypeptide reads, in one-letter code: Transcriptional regulator MraZ (143 aa).

SpoVT-AbrB domains lie at 5–47 (SHAP…PMAE) and 76–119 (AADD…DAQR).

It belongs to the MraZ family. Forms oligomers.

It is found in the cytoplasm. The protein localises to the nucleoid. This chain is Transcriptional regulator MraZ, found in Frankia casuarinae (strain DSM 45818 / CECT 9043 / HFP020203 / CcI3).